A 255-amino-acid polypeptide reads, in one-letter code: NAD kinase (255 aa).

Asp44 functions as the Proton acceptor in the catalytic mechanism. NAD(+) is bound by residues 44–45 (DG), His49, 114–115 (NE), Asp144, Ala152, 155–160 (SAYNLS), and Gln216.

The protein belongs to the NAD kinase family. The cofactor is a divalent metal cation.

Its subcellular location is the cytoplasm. The catalysed reaction is NAD(+) + ATP = ADP + NADP(+) + H(+). Involved in the regulation of the intracellular balance of NAD and NADP, and is a key enzyme in the biosynthesis of NADP. Catalyzes specifically the phosphorylation on 2'-hydroxyl of the adenosine moiety of NAD to yield NADP. This Rickettsia conorii (strain ATCC VR-613 / Malish 7) protein is NAD kinase.